Reading from the N-terminus, the 303-residue chain is Glycine--tRNA ligase alpha subunit (303 aa).

The protein belongs to the class-II aminoacyl-tRNA synthetase family. Tetramer of two alpha and two beta subunits.

It is found in the cytoplasm. The catalysed reaction is tRNA(Gly) + glycine + ATP = glycyl-tRNA(Gly) + AMP + diphosphate. This Klebsiella pneumoniae (strain 342) protein is Glycine--tRNA ligase alpha subunit.